A 213-amino-acid chain; its full sequence is Kynurenine formamidase (213 aa).

Tryptophan 18 serves as a coordination point for substrate. Residues histidine 48, histidine 52, and aspartate 54 each contribute to the Zn(2+) site. Residue histidine 58 is the Proton donor/acceptor of the active site. Residues histidine 160 and glutamate 172 each coordinate Zn(2+).

This sequence belongs to the Cyclase 1 superfamily. KynB family. As to quaternary structure, homodimer. It depends on Zn(2+) as a cofactor.

It catalyses the reaction N-formyl-L-kynurenine + H2O = L-kynurenine + formate + H(+). Its pathway is amino-acid degradation; L-tryptophan degradation via kynurenine pathway; L-kynurenine from L-tryptophan: step 2/2. In terms of biological role, catalyzes the hydrolysis of N-formyl-L-kynurenine to L-kynurenine, the second step in the kynurenine pathway of tryptophan degradation. This chain is Kynurenine formamidase, found in Burkholderia mallei (strain NCTC 10247).